Reading from the N-terminus, the 1576-residue chain is MKMRNHKENGNGSEMGESTKSLAKMEPENNNKISVVSVSKLLLKDSNGANSRSSNSNASFSSASVAGSVQDDLPHHNSSSSQLGQQHGSSLDQCGLTQAGLEEYNNRSSSYYDQTAFHHQKQPSYAQSEGYHSYVSSSDSTSATPFLDKLRQESDLLSRQSHHWSENDLSSVCSNSVAPSPIPLLARQSHSHSHSHAHSHSNSHGHSHGHAHSASSSSSSNNNSNGSATNNNNNNSSESTSSTETLKWLGSMSDISEASHATGYSAISESVSSSQRIVHSSRVPTPKRHHSESVLYLHNNEEQGDSSPTASNSSQMMISEEANGEESPPSVQPLRIQHRHSPSYPPVHTSMVLHHFQQQQQQQQDYQHPSRHHTNQSTLSTQSSLLELASPTEKPRSLMGQSHSMGDLQQKNPHQNPMLGRSAGQQHKSSISVTISSSEAVVTIAPQPPAGKPSKLQLSLGKSEALSCSTPNMGEQSPTNSIDSYRSNHRLFPVSTYTEPVHSNTSQYVQHPKPQFSSGLHKSAKLPVITPAGATVQPTWHSVAERINDFERSQLGEPPKFAYLEPTKTHRLSNPALKALQKNAVQSYVERQQQQQKEEQQLLRPHSQSYQACHVERKSLPNNLSPIMVGLPTGSNSASTRDCSSPTPPPPPRRSGSLLPNLLRRSSSASDYAEFRELHQAQGQVKGPSIRNISNAEKISFNDCGMPPPPPPPRGRLAVPTRRTSSATEYAPMRDKLLLQQAAALAHQQHHPQQHRHAQPPHVPPERPPKHPNLRVPSPELPPPPQSELDISYTFDEPLPPPPPPEVLQPRPPPSPNRRNCFAGASTRRTTYEAPPPTAIVAAKVPPLVPKKPTSLQHKHLANGGGGSRKRPHHATPQPILENVASPVAPPPPLLPRARSTAHDNVIASNLESNQQKRSNSKASYLPRQSLEKLNNTDPDHGIYKLTLTSNEDLVAHTKPSYGVTGKLPNNLPDVLPLGVKLHQQPKLQPGSPNGDANVTLRYGSNNNLTGNSPTVAPPPYYGGGQRYSTPVLGQGYGKSSKPVTPQQYTRSQSYDVKHTSAVTMPTMSQSHVDLKQAAHDLETTLEEVLPTATPTPTPTPTPTPPRLSPASSHSDCSLSTSSLECTINPIATPIPKPEAHIFRAEVISTTLNTNPLTTPPKPAMNRQESLRENIEKITQLQSVLMSAHLCDASLLGGYTTPLITSPTASFANEPLMTPPLPPSPPPPLEPEEEEEQEENDVHDKQPEIEELQLMQRSELVLMVNPKPSTTDMACQTDELEDRDTDLEAAREEHQTRTTLQPRQRQPIELDYEQMSRELVKLLPPGDKIADILTPKICKPTSQYVSNLYNPDVPLRLAKRDVGTSTLMRMKSITSSAEIRVVSVELQLAEPSEEPTNLIKQKMDELIKHLNQKIVSLKREQQTISEECSANDRLGQDLFAKLAEKVRPSEASKFRTHVDAVGNITSLLLSLSERLAQTESSLETRQQERGALESKRDLLYEQMEEAQRLKSDIERRGVSIAGLLAKNLSADMCADYDYFINMKAKLIADARDLAVRIKGSEEQLSSLSDALVQSDC.

Disordered regions lie at residues 1-31 (MKMR…ENNN), 46-100 (SNGA…TQAG), 112-142 (YDQT…DSTS), 187-244 (RQSH…SSTE), 267-434 (ISES…ISVT), 589-609 (VERQ…HSQS), and 621-660 (PNNL…SLLP). Residues 10 to 21 (GNGSEMGESTKS) show a composition bias toward polar residues. 3 stretches are compositionally biased toward low complexity: residues 46-69 (SNGA…AGSV), 76-91 (HNSS…GSSL), and 128-142 (SEGY…DSTS). The span at 189–211 (SHSHSHSHAHSHSNSHGHSHGHA) shows a compositional bias: basic residues. 2 stretches are compositionally biased toward low complexity: residues 212-244 (HSAS…SSTE) and 267-283 (ISES…SSRV). The span at 305–317 (DSSPTASNSSQMM) shows a compositional bias: polar residues. The segment covering 376 to 388 (QSTLSTQSSLLEL) has biased composition (low complexity). Over residues 399–415 (MGQSHSMGDLQQKNPHQ) the composition is skewed to polar residues. Position 404 is a phosphoserine (Ser404). Residues 445 to 920 (APQPPAGKPS…LESNQQKRSN (476 aa)) form an F-actin binding region required for planar polarity and cortical localization region. Residues 633-643 (TGSNSASTRDC) are compositionally biased toward polar residues. 2 positions are modified to phosphoserine: Ser667 and Ser668. Disordered regions lie at residues 699 to 728 (ISFN…SSAT), 743 to 823 (AALA…NCFA), 849 to 876 (VPKK…HHAT), 910 to 939 (NLES…NTDP), 1036 to 1055 (GYGK…SQSY), 1091 to 1116 (PTAT…SHSD), and 1210 to 1244 (SFAN…DVHD). Basic residues predominate over residues 748–759 (QQHHPQQHRHAQ). Over residues 798-816 (PLPPPPPPEVLQPRPPPSP) the composition is skewed to pro residues. 2 stretches are compositionally biased toward polar residues: residues 910–923 (NLES…NSKA) and 1042–1055 (KPVT…SQSY). 2 stretches are compositionally biased toward pro residues: residues 1094 to 1108 (TPTP…PPRL) and 1217 to 1229 (MTPP…PPPL). Residues 1230–1239 (EPEEEEEQEE) are compositionally biased toward acidic residues. Residues 1232–1296 (EEEEEQEEND…LEAAREEHQT (65 aa)) adopt a coiled-coil conformation. Residues 1305-1572 (RQPIELDYEQ…QLSSLSDALV (268 aa)) form the ASD2 domain.

Belongs to the shroom family. As to quaternary structure, monomer or homodimer. Interacts with Rok. In terms of assembly, binds (via N-terminus) to F-actin.

The protein localises to the cell junction. It is found in the adherens junction. It localises to the cytoplasm. The protein resides in the cytoskeleton. Its subcellular location is the apical cell membrane. Functionally, binds to Rho-kinase Rok and targets it to the apical cell cortex where it mediates apical constriction. During embryogenic axis elongation, required for the localization to adherens junctions and the establishment of planar polarization of both Rho-kinase Rok and myosin regulatory light chain sqh. May be involved in the assembly of microtubule arrays during cell elongation. The chain is Protein Shroom from Drosophila melanogaster (Fruit fly).